We begin with the raw amino-acid sequence, 225 residues long: Enolase-phosphatase E1 (225 aa).

Belongs to the HAD-like hydrolase superfamily. MasA/MtnC family. As to quaternary structure, monomer. The cofactor is Mg(2+).

The catalysed reaction is 5-methylsulfanyl-2,3-dioxopentyl phosphate + H2O = 1,2-dihydroxy-5-(methylsulfanyl)pent-1-en-3-one + phosphate. It participates in amino-acid biosynthesis; L-methionine biosynthesis via salvage pathway; L-methionine from S-methyl-5-thio-alpha-D-ribose 1-phosphate: step 3/6. It functions in the pathway amino-acid biosynthesis; L-methionine biosynthesis via salvage pathway; L-methionine from S-methyl-5-thio-alpha-D-ribose 1-phosphate: step 4/6. Bifunctional enzyme that catalyzes the enolization of 2,3-diketo-5-methylthiopentyl-1-phosphate (DK-MTP-1-P) into the intermediate 2-hydroxy-3-keto-5-methylthiopentenyl-1-phosphate (HK-MTPenyl-1-P), which is then dephosphorylated to form the acireductone 1,2-dihydroxy-3-keto-5-methylthiopentene (DHK-MTPene). The polypeptide is Enolase-phosphatase E1 (Shewanella halifaxensis (strain HAW-EB4)).